Reading from the N-terminus, the 30-residue chain is Mycofactocin precursor peptide (30 aa).

Belongs to the mycofactocin precursor peptide family. In terms of assembly, interacts with MftB. The post-translational modifications that lead to mycofactocin involve oxidative decarboxylation of the C-terminal tyrosine residue catalyzed by MftC, introduction of a tyramine-valine cross-link, removal of the modified C-terminal dipeptide by MftE. The released dipeptide then undergoes oxidative deamination by MftD, glycosylation by MftF and methylation by an unknown enzyme.

In terms of biological role, precursor peptide that leads to mycofactocin (MFT) after extensive post-translational modifications by enzymes encoded by adjacent genes. Mycofactocin acts as a redox cofactor of nicotinamide-dependent oxidoreductases encoded in the same locus. The sequence is that of Mycofactocin precursor peptide from Mycobacterium ulcerans (strain Agy99).